The chain runs to 200 residues: WASH complex subunit 3 (200 aa).

Residues 56-76 (SLRIQQIETTLSILEAKLASI) are a coiled coil. Disordered regions lie at residues 87-130 (VRAP…AENI) and 165-200 (DPNL…SFSD).

Belongs to the CCDC53 family. As to quaternary structure, component of the WASH complex.

This Danio rerio (Zebrafish) protein is WASH complex subunit 3.